Reading from the N-terminus, the 296-residue chain is 2-methylisocitrate lyase (296 aa).

45–47 serves as a coordination point for substrate; it reads SGG. The Mg(2+) site is built by Asp85 and Asp87. Substrate contacts are provided by residues 123 to 124, Arg158, Glu188, 210 to 212, Arg241, and Arg270; these read CG and NIT.

The protein belongs to the isocitrate lyase/PEP mutase superfamily. Methylisocitrate lyase family. In terms of assembly, homotetramer; dimer of dimers. Requires Mg(2+) as cofactor.

The catalysed reaction is (2S,3R)-3-hydroxybutane-1,2,3-tricarboxylate = pyruvate + succinate. It functions in the pathway organic acid metabolism; propanoate degradation. Its function is as follows. Involved in the catabolism of short chain fatty acids (SCFA) via the 2-methylcitrate cycle I (propionate degradation route). Catalyzes the thermodynamically favored C-C bond cleavage of (2R,3S)-2-methylisocitrate to yield pyruvate and succinate via an alpha-carboxy-carbanion intermediate. In Escherichia coli (strain K12), this protein is 2-methylisocitrate lyase.